Reading from the N-terminus, the 521-residue chain is GMP synthase [glutamine-hydrolyzing] (521 aa).

The 199-residue stretch at 5 to 203 folds into the Glutamine amidotransferase type-1 domain; that stretch reads KILILDFGSQ…VHEICGCGND (199 aa). Catalysis depends on C82, which acts as the Nucleophile. Active-site residues include H177 and E179. The 193-residue stretch at 204-396 folds into the GMPS ATP-PPase domain; the sequence is WNMPDYISEA…LGLPHDMVYR (193 aa). 231–237 provides a ligand contact to ATP; the sequence is SGGVDSS.

Homodimer.

It catalyses the reaction XMP + L-glutamine + ATP + H2O = GMP + L-glutamate + AMP + diphosphate + 2 H(+). It functions in the pathway purine metabolism; GMP biosynthesis; GMP from XMP (L-Gln route): step 1/1. In terms of biological role, catalyzes the synthesis of GMP from XMP. The sequence is that of GMP synthase [glutamine-hydrolyzing] from Azoarcus sp. (strain BH72).